We begin with the raw amino-acid sequence, 217 residues long: MQSRLISIAASEGFTFHHAERNESTLTLWLKDGPSKLPGYATHQVGVAGAVLDEDNGKVLVVQDRNKTVNAWKFPGGLSDQGEDIGATAVREVLEETGIHSEFKSLLSIRQQHNHPGAFGKSDLYIICRLKPLSYTINFCHQECLKCEWMDLQELAYCSNTTIITSRVAKLLLYGYNEGFHLVDLTMRTFPAVYSGLFYSLYHKELPETYEGSATLL.

One can recognise a Nudix hydrolase domain in the interval 42 to 177; sequence THQVGVAGAV…VAKLLLYGYN (136 aa). The Nudix box signature appears at 77–98; that stretch reads GLSDQGEDIGATAVREVLEETG.

This sequence belongs to the Nudix hydrolase family. Detected in liver (at protein level).

It localises to the cytoplasm. The protein localises to the nucleus. It is found in the mitochondrion. Its function is as follows. May contribute to the regulation of cell proliferation. The chain is Nucleoside diphosphate-linked moiety X motif 6 (nudt6) from Xenopus laevis (African clawed frog).